Consider the following 460-residue polypeptide: tRNA (guanine(10)-N(2))-methyltransferase TRMT11 (460 aa).

At alanine 2 the chain carries N-acetylalanine.

This sequence belongs to the class I-like SAM-binding methyltransferase superfamily. TRM11 methyltransferase family. As to quaternary structure, part of the heterodimeric TRMT11-TRM112 methyltransferase complex; this complex forms an active tRNA methyltransferase, where TRMT112 acts as an activator of the catalytic subunit TRMT11.

The protein resides in the cytoplasm. The enzyme catalyses guanosine(10) in tRNA + S-adenosyl-L-methionine = N(2)-methylguanosine(10) in tRNA + S-adenosyl-L-homocysteine + H(+). Its function is as follows. Catalytic subunit of the TRMT11-TRM112 methyltransferase complex, that specifically mediates the S-adenosyl-L-methionine-dependent N(2)-methylation of guanosine nucleotide at position 10 (m2G10) in tRNAs. This is one of the major tRNA (guanine-N(2))-methyltransferases. This is tRNA (guanine(10)-N(2))-methyltransferase TRMT11 from Mus musculus (Mouse).